The chain runs to 406 residues: Putative nickel insertion protein (406 aa).

This sequence belongs to the LarC family.

The polypeptide is Putative nickel insertion protein (Methanosphaera stadtmanae (strain ATCC 43021 / DSM 3091 / JCM 11832 / MCB-3)).